Consider the following 74-residue polypeptide: Translation initiation factor IF-1, chloroplastic (74 aa).

The 72-residue stretch at 1–72 folds into the S1-like domain; the sequence is MERQNLIEME…TKGRITYRLR (72 aa).

This sequence belongs to the IF-1 family. In terms of assembly, component of the 30S ribosomal translation pre-initiation complex which assembles on the 30S ribosome in the order IF-2 and IF-3, IF-1 and N-formylmethionyl-tRNA(fMet); mRNA recruitment can occur at any time during PIC assembly.

Its subcellular location is the plastid. It localises to the chloroplast. One of the essential components for the initiation of protein synthesis. Stabilizes the binding of IF-2 and IF-3 on the 30S subunit to which N-formylmethionyl-tRNA(fMet) subsequently binds. Helps modulate mRNA selection, yielding the 30S pre-initiation complex (PIC). Upon addition of the 50S ribosomal subunit IF-1, IF-2 and IF-3 are released leaving the mature 70S translation initiation complex. The sequence is that of Translation initiation factor IF-1, chloroplastic from Mesostigma viride (Green alga).